We begin with the raw amino-acid sequence, 187 residues long: Ribosome-recycling factor (187 aa).

Belongs to the RRF family.

The protein resides in the cytoplasm. Its function is as follows. Responsible for the release of ribosomes from messenger RNA at the termination of protein biosynthesis. May increase the efficiency of translation by recycling ribosomes from one round of translation to another. This is Ribosome-recycling factor from Flavobacterium johnsoniae (strain ATCC 17061 / DSM 2064 / JCM 8514 / BCRC 14874 / CCUG 350202 / NBRC 14942 / NCIMB 11054 / UW101) (Cytophaga johnsonae).